We begin with the raw amino-acid sequence, 259 residues long: Phosphatidylglycerol--prolipoprotein diacylglyceryl transferase (259 aa).

The next 4 helical transmembrane spans lie at 12 to 32 (LSLHWYAVCILVGLLLAVYLA), 46 to 66 (IIDFILIAFPLAIIGARIYYV), 83 to 103 (IWNGGIAIYGGLITGTIVLFV), and 109 to 129 (VLNPIHFLDIAAPSVMLAQAI). Position 131 (R131) interacts with a 1,2-diacyl-sn-glycero-3-phospho-(1'-sn-glycerol). The next 3 helical transmembrane spans lie at 167–187 (VPTFLYESMWNLIGFVIIMVW), 194–214 (LLDGDIISFYLIWYGCGRLVI), and 226–246 (GIRVSQYVSVLLIIIAIVFIF).

Belongs to the Lgt family.

The protein resides in the cell membrane. It catalyses the reaction L-cysteinyl-[prolipoprotein] + a 1,2-diacyl-sn-glycero-3-phospho-(1'-sn-glycerol) = an S-1,2-diacyl-sn-glyceryl-L-cysteinyl-[prolipoprotein] + sn-glycerol 1-phosphate + H(+). It functions in the pathway protein modification; lipoprotein biosynthesis (diacylglyceryl transfer). Its function is as follows. Catalyzes the transfer of the diacylglyceryl group from phosphatidylglycerol to the sulfhydryl group of the N-terminal cysteine of a prolipoprotein, the first step in the formation of mature lipoproteins. The polypeptide is Phosphatidylglycerol--prolipoprotein diacylglyceryl transferase (Streptococcus equi subsp. zooepidemicus (strain H70)).